The sequence spans 255 residues: MALPAARSALSARAFIRPAAALNAAASSSRYLSTTTPRHDAPVATTPGNSETALPVPLPGIKFLSMPPVTPHPPTHGIHVATLHLQAHHPYNLDLVSQFAVHSAHSLNIPTSLPAFLPREKSLYTVLKSPFVKKKAQENFERRTHKRAIKVYDADREAIDLWLRYLRQNALPGVGMKAYIHEWVELGFGRKEAEGQNEIEMEVEEKRIQDAAAELVKALSEGEGEDQAEGVQKIVDAAREEKPAEKLKEEEAKSS.

Residues 1 to 32 constitute a mitochondrion transit peptide; sequence MALPAARSALSARAFIRPAAALNAAASSSRYL. 2 disordered regions span residues 30 to 52 and 220 to 255; these read RYLSTTTPRHDAPVATTPGNSET and SEGEGEDQAEGVQKIVDAAREEKPAEKLKEEEAKSS. The segment covering 236-255 has biased composition (basic and acidic residues); that stretch reads DAAREEKPAEKLKEEEAKSS.

This sequence belongs to the universal ribosomal protein uS10 family. Part of the mitochondrial small ribosomal subunit.

Its subcellular location is the mitochondrion. Involved in mitochondrial genome encoded proteins translation. Involved in the binding of tRNA to the ribosomes. The chain is Small ribosomal subunit protein uS10m (RSM10) from Cryptococcus neoformans var. neoformans serotype D (strain B-3501A) (Filobasidiella neoformans).